The primary structure comprises 150 residues: Transcription antitermination protein NusB (150 aa).

Belongs to the NusB family.

In terms of biological role, involved in transcription antitermination. Required for transcription of ribosomal RNA (rRNA) genes. Binds specifically to the boxA antiterminator sequence of the ribosomal RNA (rrn) operons. The polypeptide is Transcription antitermination protein NusB (Streptococcus equi subsp. zooepidemicus (strain H70)).